The sequence spans 277 residues: 4-hydroxy-3-methylbut-2-enyl diphosphate reductase (277 aa).

Cysteine 12 is a binding site for [4Fe-4S] cluster. (2E)-4-hydroxy-3-methylbut-2-enyl diphosphate-binding residues include histidine 36 and histidine 70. Dimethylallyl diphosphate is bound by residues histidine 36 and histidine 70. 2 residues coordinate isopentenyl diphosphate: histidine 36 and histidine 70. Residue cysteine 92 coordinates [4Fe-4S] cluster. Residue histidine 120 participates in (2E)-4-hydroxy-3-methylbut-2-enyl diphosphate binding. Residue histidine 120 coordinates dimethylallyl diphosphate. Residue histidine 120 participates in isopentenyl diphosphate binding. Glutamate 122 (proton donor) is an active-site residue. A (2E)-4-hydroxy-3-methylbut-2-enyl diphosphate-binding site is contributed by threonine 158. Position 186 (cysteine 186) interacts with [4Fe-4S] cluster. Residues serine 214, asparagine 216, and serine 258 each coordinate (2E)-4-hydroxy-3-methylbut-2-enyl diphosphate. Dimethylallyl diphosphate-binding residues include serine 214, asparagine 216, and serine 258. Residues serine 214, asparagine 216, and serine 258 each coordinate isopentenyl diphosphate.

This sequence belongs to the IspH family. It depends on [4Fe-4S] cluster as a cofactor.

The catalysed reaction is isopentenyl diphosphate + 2 oxidized [2Fe-2S]-[ferredoxin] + H2O = (2E)-4-hydroxy-3-methylbut-2-enyl diphosphate + 2 reduced [2Fe-2S]-[ferredoxin] + 2 H(+). The enzyme catalyses dimethylallyl diphosphate + 2 oxidized [2Fe-2S]-[ferredoxin] + H2O = (2E)-4-hydroxy-3-methylbut-2-enyl diphosphate + 2 reduced [2Fe-2S]-[ferredoxin] + 2 H(+). It participates in isoprenoid biosynthesis; dimethylallyl diphosphate biosynthesis; dimethylallyl diphosphate from (2E)-4-hydroxy-3-methylbutenyl diphosphate: step 1/1. The protein operates within isoprenoid biosynthesis; isopentenyl diphosphate biosynthesis via DXP pathway; isopentenyl diphosphate from 1-deoxy-D-xylulose 5-phosphate: step 6/6. Its function is as follows. Catalyzes the conversion of 1-hydroxy-2-methyl-2-(E)-butenyl 4-diphosphate (HMBPP) into a mixture of isopentenyl diphosphate (IPP) and dimethylallyl diphosphate (DMAPP). Acts in the terminal step of the DOXP/MEP pathway for isoprenoid precursor biosynthesis. In Campylobacter jejuni subsp. jejuni serotype O:6 (strain 81116 / NCTC 11828), this protein is 4-hydroxy-3-methylbut-2-enyl diphosphate reductase.